We begin with the raw amino-acid sequence, 540 residues long: Light-independent protochlorophyllide reductase subunit B (540 aa).

Residue Asp36 participates in [4Fe-4S] cluster binding. Asp287 serves as the catalytic Proton donor. 422–423 provides a ligand contact to substrate; that stretch reads GL.

The protein belongs to the ChlB/BchB/BchZ family. Protochlorophyllide reductase is composed of three subunits; BchL, BchN and BchB. Forms a heterotetramer of two BchB and two BchN subunits. [4Fe-4S] cluster serves as cofactor.

It carries out the reaction chlorophyllide a + oxidized 2[4Fe-4S]-[ferredoxin] + 2 ADP + 2 phosphate = protochlorophyllide a + reduced 2[4Fe-4S]-[ferredoxin] + 2 ATP + 2 H2O. The protein operates within porphyrin-containing compound metabolism; bacteriochlorophyll biosynthesis (light-independent). In terms of biological role, component of the dark-operative protochlorophyllide reductase (DPOR) that uses Mg-ATP and reduced ferredoxin to reduce ring D of protochlorophyllide (Pchlide) to form chlorophyllide a (Chlide). This reaction is light-independent. The NB-protein (BchN-BchB) is the catalytic component of the complex. This chain is Light-independent protochlorophyllide reductase subunit B, found in Rhodopseudomonas palustris (strain TIE-1).